A 365-amino-acid chain; its full sequence is Protein-glutamate methylesterase/protein-glutamine glutaminase 1 (365 aa).

The region spanning 4-121 (KVLVVDDSQF…SRDSVVLKKR (118 aa)) is the Response regulatory domain. Asp55 is modified (4-aspartylphosphate). The segment at 138–173 (AARSTTQPSGVRPSALGANLSSSRSPRPASSAPSAP) is disordered. Positions 158 to 172 (SSSRSPRPASSAPSA) are enriched in low complexity. Positions 182 to 365 (KLVAIGASTG…QVWQRLVSDV (184 aa)) constitute a CheB-type methylesterase domain. Catalysis depends on residues Ser189, His216, and Asp310.

Belongs to the CheB family. Post-translationally, phosphorylated by CheA. Phosphorylation of the N-terminal regulatory domain activates the methylesterase activity.

The protein localises to the cytoplasm. It catalyses the reaction [protein]-L-glutamate 5-O-methyl ester + H2O = L-glutamyl-[protein] + methanol + H(+). The enzyme catalyses L-glutaminyl-[protein] + H2O = L-glutamyl-[protein] + NH4(+). In terms of biological role, involved in chemotaxis. Part of a chemotaxis signal transduction system that modulates chemotaxis in response to various stimuli. Catalyzes the demethylation of specific methylglutamate residues introduced into the chemoreceptors (methyl-accepting chemotaxis proteins or MCP) by CheR. Also mediates the irreversible deamidation of specific glutamine residues to glutamic acid. This chain is Protein-glutamate methylesterase/protein-glutamine glutaminase 1, found in Saccharophagus degradans (strain 2-40 / ATCC 43961 / DSM 17024).